The sequence spans 280 residues: Nitrogenase iron protein (280 aa).

Residue 9-16 coordinates ATP; that stretch reads GKGGIGKS. Position 97 (cysteine 97) interacts with [4Fe-4S] cluster. At arginine 100 the chain carries ADP-ribosylarginine; by dinitrogenase reductase ADP-ribosyltransferase. Cysteine 132 contacts [4Fe-4S] cluster.

This sequence belongs to the NifH/BchL/ChlL family. As to quaternary structure, homodimer. Requires [4Fe-4S] cluster as cofactor. In terms of processing, the reversible ADP-ribosylation of Arg-100 inactivates the nitrogenase reductase and regulates nitrogenase activity.

The catalysed reaction is N2 + 8 reduced [2Fe-2S]-[ferredoxin] + 16 ATP + 16 H2O = H2 + 8 oxidized [2Fe-2S]-[ferredoxin] + 2 NH4(+) + 16 ADP + 16 phosphate + 6 H(+). In terms of biological role, the key enzymatic reactions in nitrogen fixation are catalyzed by the nitrogenase complex, which has 2 components: the iron protein and the molybdenum-iron protein. The protein is Nitrogenase iron protein of Desulforudis audaxviator (strain MP104C).